The chain runs to 241 residues: NAD(P)H-hydrate epimerase (241 aa).

Residues 11–221 (AASLDKDLME…SIVEKYGLNC (211 aa)) enclose the YjeF N-terminal domain. A (6S)-NADPHX-binding site is contributed by 65–69 (NNGGD). K(+) contacts are provided by N66 and D127. (6S)-NADPHX is bound by residues 131–137 (GFSFGGP) and D160. S163 lines the K(+) pocket.

It belongs to the NnrE/AIBP family. K(+) serves as cofactor.

It localises to the cytoplasm. The protein resides in the mitochondrion. The catalysed reaction is (6R)-NADHX = (6S)-NADHX. It carries out the reaction (6R)-NADPHX = (6S)-NADPHX. Functionally, catalyzes the epimerization of the S- and R-forms of NAD(P)HX, a damaged form of NAD(P)H that is a result of enzymatic or heat-dependent hydration. This is a prerequisite for the S-specific NAD(P)H-hydrate dehydratase to allow the repair of both epimers of NAD(P)HX. This Aspergillus fumigatus (strain ATCC MYA-4609 / CBS 101355 / FGSC A1100 / Af293) (Neosartorya fumigata) protein is NAD(P)H-hydrate epimerase.